Reading from the N-terminus, the 155-residue chain is MSTNKVNKERTFLAVKPDGVARGLVGEIIARYEKKGFVLVGLKQLVPTKDLAESHYAEHKERPFFGGLVSFITSGPVVAMVFEGKGVVASARLMIGVTNPLASAPGSIRGDFGVDVGRNIIHGSDSVESANREIALWFKPEELLTEVKPNPNLYE.

ATP is bound by residues Lys16, Phe64, Arg92, Thr98, Arg109, and Asn119. His122 serves as the catalytic Pros-phosphohistidine intermediate.

Belongs to the NDK family. Homohexamer. The cofactor is Mg(2+).

It is found in the cytoplasm. The enzyme catalyses a 2'-deoxyribonucleoside 5'-diphosphate + ATP = a 2'-deoxyribonucleoside 5'-triphosphate + ADP. It catalyses the reaction a ribonucleoside 5'-diphosphate + ATP = a ribonucleoside 5'-triphosphate + ADP. Major role in the synthesis of nucleoside triphosphates other than ATP. The protein is Nucleoside diphosphate kinase, cytosolic (ndkC-1) of Dictyostelium discoideum (Social amoeba).